Reading from the N-terminus, the 321-residue chain is Probable protein phosphatase methylesterase 1 (321 aa).

Active-site residues include S170, D195, and H307.

Belongs to the AB hydrolase superfamily.

It carries out the reaction [phosphatase 2A protein]-C-terminal L-leucine methyl ester + H2O = [phosphatase 2A protein]-C-terminal L-leucine + methanol + H(+). Demethylates proteins that have been reversibly carboxymethylated. This Dictyostelium discoideum (Social amoeba) protein is Probable protein phosphatase methylesterase 1 (ppme1).